Reading from the N-terminus, the 179-residue chain is Large ribosomal subunit protein uL5 (179 aa).

Belongs to the universal ribosomal protein uL5 family. In terms of assembly, part of the 50S ribosomal subunit; part of the 5S rRNA/L5/L18/L25 subcomplex. Contacts the 5S rRNA and the P site tRNA. Forms a bridge to the 30S subunit in the 70S ribosome.

This is one of the proteins that bind and probably mediate the attachment of the 5S RNA into the large ribosomal subunit, where it forms part of the central protuberance. In the 70S ribosome it contacts protein S13 of the 30S subunit (bridge B1b), connecting the 2 subunits; this bridge is implicated in subunit movement. Contacts the P site tRNA; the 5S rRNA and some of its associated proteins might help stabilize positioning of ribosome-bound tRNAs. This Nitratidesulfovibrio vulgaris (strain DSM 19637 / Miyazaki F) (Desulfovibrio vulgaris) protein is Large ribosomal subunit protein uL5.